The following is a 241-amino-acid chain: Tetraspanin-1 (241 aa).

Residues 1–11 (MQCFSFIKTMM) are Cytoplasmic-facing. Residues 12–32 (ILFNLLIFLCGAALLAVGIWV) traverse the membrane as a helical segment. At 33-52 (SIDGASFLKIFGPLSSSAMQ) the chain is on the extracellular side. Residues 53–73 (FVNVGYFLIAAGVVVFALGFL) traverse the membrane as a helical segment. The Cytoplasmic segment spans residues 74-88 (GCYGAKTESKCALVT). The chain crosses the membrane as a helical span at residues 89-109 (FFFILLLIFIAEVAAAVVALV). At 110–211 (YTTMAEHFLT…NQLLYDIRTN (102 aa)) the chain is on the extracellular side. N-linked (GlcNAc...) asparagine glycosylation is found at N141, N154, N178, and N184. Residues 212–232 (AVTVGGVAAGIGGLELAAMIV) traverse the membrane as a helical segment. The Cytoplasmic segment spans residues 233 to 241 (SMYLYCNLQ).

This sequence belongs to the tetraspanin (TM4SF) family. Interacts with SLC19A2. Interacts with NTRK1/TRKA.

It is found in the cell membrane. It localises to the lysosome membrane. Its function is as follows. Structural component of specialized membrane microdomains known as tetraspanin-enriched microdomains (TERMs), which act as platforms for receptor clustering and signaling. Participates thereby in diverse biological functions such as cell signal transduction, adhesion, migration and protein trafficking. Regulates neuronal differentiation in response to NGF by facilitating NGF-mediated activation of NTRK1/TRKA receptor tyrosine kinase and subsequent downstream signaling pathways. Plays a role in the inhibition of TNFalpha-induced apoptosis. Mechanistically, inhibits the NF-kappa-B signaling pathway by blocking phosphorylation of CHUK. Also promotes the stability of the thiamine transporter 1/SLC19A2 in intestinal epithelial cells leading to an increase of thiamine uptake process. This Homo sapiens (Human) protein is Tetraspanin-1 (TSPAN1).